Consider the following 542-residue polypeptide: 2,3-bisphosphoglycerate-independent phosphoglycerate mutase (542 aa).

The Mn(2+) site is built by Asp24 and Ser74. The active-site Phosphoserine intermediate is Ser74. Residues His135, 165–166 (RD), Arg197, Arg203, 268–271 (RPDR), and Lys341 contribute to the substrate site. Residues Asp408, His412, Asp449, His450, and His467 each contribute to the Mn(2+) site.

Belongs to the BPG-independent phosphoglycerate mutase family. As to quaternary structure, monomer. It depends on Mn(2+) as a cofactor.

It carries out the reaction (2R)-2-phosphoglycerate = (2R)-3-phosphoglycerate. Its pathway is carbohydrate degradation; glycolysis; pyruvate from D-glyceraldehyde 3-phosphate: step 3/5. Catalyzes the interconversion of 2-phosphoglycerate and 3-phosphoglycerate. This Prochlorococcus marinus (strain NATL1A) protein is 2,3-bisphosphoglycerate-independent phosphoglycerate mutase.